Here is a 726-residue protein sequence, read N- to C-terminus: Catalase-peroxidase (726 aa).

The disordered stretch occupies residues 1-33 (MSTTDDTHNTLSTGKCPFHQGGHDRSAGAGTAS). The segment at residues 105–226 (WHGAGTYRSI…LGATEMGLIY (122 aa)) is a cross-link (tryptophyl-tyrosyl-methioninium (Trp-Tyr) (with M-252)). His-106 serves as the catalytic Proton acceptor. Positions 226–252 (YVNPEGPDHSGEPLSAAAAIRATFGNM) form a cross-link, tryptophyl-tyrosyl-methioninium (Tyr-Met) (with W-105). His-267 provides a ligand contact to heme b.

This sequence belongs to the peroxidase family. Peroxidase/catalase subfamily. In terms of assembly, homodimer or homotetramer. Requires heme b as cofactor. Formation of the three residue Trp-Tyr-Met cross-link is important for the catalase, but not the peroxidase activity of the enzyme.

The enzyme catalyses H2O2 + AH2 = A + 2 H2O. It carries out the reaction 2 H2O2 = O2 + 2 H2O. In terms of biological role, bifunctional enzyme with both catalase and broad-spectrum peroxidase activity. This is Catalase-peroxidase from Salmonella paratyphi A (strain ATCC 9150 / SARB42).